A 670-amino-acid polypeptide reads, in one-letter code: Sodium/potassium/calcium exchanger 2 (670 aa).

At 1-38 the chain is on the cytoplasmic side; the sequence is MDLHQSATVRLLQEWCSHESPSGCRRHYNTRKKLKLIR. The chain crosses the membrane as a helical span at residues 39 to 59; that stretch reads VIGLVMGLVAVSTVPFSISAF. At 60–133 the chain is on the extracellular side; sequence TETYSQNNRG…DVFSLEERRK (74 aa). Disordered stretches follow at residues 67 to 86 and 91 to 122; these read NRGEASDVTGPRAAPGHRQR and LNDKIRDYTPQPPASQEDRSENGTDHAQGDYP. Residues 106-122 are compositionally biased toward basic and acidic residues; that stretch reads QEDRSENGTDHAQGDYP. N-linked (GlcNAc...) asparagine glycosylation is present at N112. Residues 134 to 154 traverse the membrane as a helical segment; that stretch reads GAIILHVIGMIYMFIALAIVC. Topologically, residues 155 to 179 are cytoplasmic; it reads DEFFVPSLTVITEKLGISDDVAGAT. The stretch at 175–215 is one Alpha-1 repeat; sequence VAGATFMAAGGSAPELFTSLIGVFIAHSNVGIGTIVGSAVF. A helical transmembrane segment spans residues 180-200; that stretch reads FMAAGGSAPELFTSLIGVFIA. The Extracellular portion of the chain corresponds to 201–205; sequence HSNVG. Residues 206-226 form a helical membrane-spanning segment; that stretch reads IGTIVGSAVFNILFVIGMCAL. The Cytoplasmic segment spans residues 227–244; the sequence is FSREILNLTWWPLFRDVS. Residues 245 to 265 form a helical membrane-spanning segment; that stretch reads FYIVDLIMLIIFFLDNVIMWW. Position 266 (E266) is a topological domain, extracellular. The helical transmembrane segment at 267-287 threads the bilayer; that stretch reads SLLLLTAYFAYVVFMKFNVQV. Over 288-506 the chain is Cytoplasmic; it reads ERWVKQMINR…PDVRKPASKK (219 aa). A disordered region spans residues 312 to 335; the sequence is ASTAGDKEEPTLPNKPRLQRGGSS. 2 positions are modified to phosphoserine: S337 and S341. 2 disordered regions span residues 394 to 414 and 450 to 471; these read KCQVDENERQNGAANHVDYAA and AADAPQATETAEEDDDQPLSLS. A helical transmembrane segment spans residues 507–527; sequence FFPITFFGSITWIAVFSYLMV. The Extracellular segment spans residues 528–542; it reads WWAHQVGETIGISEE. The helical transmembrane segment at 543 to 563 threads the bilayer; it reads IMGLTILAAGTSIPDLITSVI. The Alpha-2 repeat unit spans residues 550-581; that stretch reads AAGTSIPDLITSVIVARKGLGDMAVSSSVGSN. Over 564 to 578 the chain is Cytoplasmic; the sequence is VARKGLGDMAVSSSV. The helical transmembrane segment at 579–599 threads the bilayer; the sequence is GSNIFDITVGLPLPWLLYTII. Topologically, residues 600 to 611 are extracellular; that stretch reads HRFKPVTVSSNG. A helical transmembrane segment spans residues 612–632; it reads LFCAIVLLFIMLIFVILSIAL. Topologically, residues 633–639 are cytoplasmic; sequence CKWRMNK. Residues 640–660 form a helical membrane-spanning segment; that stretch reads ILGFIMFGLYFAFLVVSVLLE. Residues 661 to 670 are Extracellular-facing; the sequence is DKVLECPVSI.

The protein belongs to the Ca(2+):cation antiporter (CaCA) (TC 2.A.19) family. SLC24A subfamily. As to expression, expressed abundantly in all regions of the brain and weakly in the eye, large intestine and adrenal tissue.

The protein localises to the cell membrane. The enzyme catalyses Ca(2+)(out) + K(+)(out) + 4 Na(+)(in) = Ca(2+)(in) + K(+)(in) + 4 Na(+)(out). In terms of biological role, calcium, potassium:sodium antiporter that transports 1 Ca(2+) and 1 K(+) in exchange for 4 Na(+). Required for learming and memory by regulating neuronal Ca(2+), which is essential for the development of synaptic plasticity. The protein is Sodium/potassium/calcium exchanger 2 (Slc24a2) of Rattus norvegicus (Rat).